A 1132-amino-acid polypeptide reads, in one-letter code: Tyrosine-protein kinase JAK2 (1132 aa).

The tract at residues 1–239 is interaction with cytokine/interferon/growth hormone receptors; sequence MGMACLTMTE…RYRFRRFIQQ (239 aa). Residues 37–380 enclose the FERM domain; that stretch reads PVLQVYLYHS…GYYRLTADAH (344 aa). The residue at position 119 (Tyr-119) is a Phosphotyrosine; by autocatalysis. A phosphotyrosine mark is found at Tyr-372 and Tyr-373. The SH2; atypical domain occupies 401 to 482; it reads HGPISMDFAI…SLKDLLNCYQ (82 aa). Ser-523 carries the phosphoserine modification. Residues 545–809 enclose the Protein kinase 1 domain; sequence LIFNESLGQG…AIIRDLNSLF (265 aa). Phosphotyrosine occurs at positions 570 and 813. One can recognise a Protein kinase 2 domain in the interval 849–1124; that stretch reads LKFLQQLGKG…SFRDLALRVD (276 aa). Residue 855 to 863 participates in ATP binding; sequence LGKGNFGSV. Phosphotyrosine; by autocatalysis is present on Tyr-868. Residue Lys-882 coordinates ATP. Phosphotyrosine; by autocatalysis occurs at positions 966 and 972. Asp-976 serves as the catalytic Proton acceptor. Phosphotyrosine; by autocatalysis is present on residues Tyr-1007 and Tyr-1008.

It belongs to the protein kinase superfamily. Tyr protein kinase family. JAK subfamily. As to quaternary structure, interacts with EPOR, LYN, SIRPA, SH2B1 and TEC. Interacts with IL23R. Interacts with SKB1. Interacts with STAM2. Interacts with IFNGR2 (via intracellular domain). Interacts with LEPR (Isoform B). Interacts with HSP90AB1; promotes functional activation in a heat shock-dependent manner. Interacts with STRA6. Interacts with RHEX; this interaction occurs in a erythropoietin (EPO)-dependent manner. Interacts with ASB2; the interaction targets JAK2 for Notch-induced proteasomal degradation. Interacts with MPL/TPOR. Mg(2+) serves as cofactor. In terms of processing, autophosphorylated, leading to regulate its activity. Leptin promotes phosphorylation on tyrosine residues, including phosphorylation on Tyr-813. Autophosphorylation on Tyr-119 in response to EPO down-regulates its kinase activity. Autophosphorylation on Tyr-868, Tyr-966 and Tyr-972 in response to growth hormone (GH) are required for maximal kinase activity. Also phosphorylated by TEC. Phosphorylated on tyrosine residues in response to interferon gamma signaling. Phosphorylated on tyrosine residues in response to a signaling cascade that is activated by increased cellular retinol. Post-translationally, undergoes Notch-induced ubiquitination and subsequent proteasomal degradation which is mediated by ASB1 or ASB2, the substrate-recognition components of probable ECS E3 ubiquitin-protein ligase complexes. Ubiquitously expressed throughout most tissues.

It is found in the endomembrane system. The protein resides in the cytoplasm. The protein localises to the nucleus. The catalysed reaction is L-tyrosyl-[protein] + ATP = O-phospho-L-tyrosyl-[protein] + ADP + H(+). Regulated by autophosphorylation, can both activate or decrease activity. Heme regulates its activity by enhancing the phosphorylation on Tyr-1007 and Tyr-1008. In terms of biological role, non-receptor tyrosine kinase involved in various processes such as cell growth, development, differentiation or histone modifications. Mediates essential signaling events in both innate and adaptive immunity. In the cytoplasm, plays a pivotal role in signal transduction via its association with type I receptors such as growth hormone (GHR), prolactin (PRLR), leptin (LEPR), erythropoietin (EPOR), thrombopoietin receptor (MPL/TPOR); or type II receptors including IFN-alpha, IFN-beta, IFN-gamma and multiple interleukins. Following ligand-binding to cell surface receptors, phosphorylates specific tyrosine residues on the cytoplasmic tails of the receptor, creating docking sites for STATs proteins. Subsequently, phosphorylates the STATs proteins once they are recruited to the receptor. Phosphorylated STATs then form homodimer or heterodimers and translocate to the nucleus to activate gene transcription. For example, cell stimulation with erythropoietin (EPO) during erythropoiesis leads to JAK2 autophosphorylation, activation, and its association with erythropoietin receptor (EPOR) that becomes phosphorylated in its cytoplasmic domain. Then, STAT5 (STAT5A or STAT5B) is recruited, phosphorylated and activated by JAK2. Once activated, dimerized STAT5 translocates into the nucleus and promotes the transcription of several essential genes involved in the modulation of erythropoiesis. Part of a signaling cascade that is activated by increased cellular retinol and that leads to the activation of STAT5 (STAT5A or STAT5B). In addition, JAK2 mediates angiotensin-2-induced ARHGEF1 phosphorylation. Plays a role in cell cycle by phosphorylating CDKN1B. Cooperates with TEC through reciprocal phosphorylation to mediate cytokine-driven activation of FOS transcription. In the nucleus, plays a key role in chromatin by specifically mediating phosphorylation of 'Tyr-41' of histone H3 (H3Y41ph), a specific tag that promotes exclusion of CBX5 (HP1 alpha) from chromatin. Up-regulates the potassium voltage-gated channel activity of KCNA3. This is Tyrosine-protein kinase JAK2 from Homo sapiens (Human).